Reading from the N-terminus, the 205-residue chain is Holliday junction branch migration complex subunit RuvA (205 aa).

A domain I region spans residues 1–64 (MIGRLRGVLI…EDAQLLYGFI (64 aa)). Positions 65–143 (TKQERSLFRL…SLMEASVGSE (79 aa)) are domain II. Residues 144-156 (REFVLQSNYSPAP) form a flexible linker region. The segment at 157 to 205 (TVNSAEEDAISALISLGYKPPQASKAVSAAYKEGMDSETLIKAALKSML) is domain III.

This sequence belongs to the RuvA family. Homotetramer. Forms an RuvA(8)-RuvB(12)-Holliday junction (HJ) complex. HJ DNA is sandwiched between 2 RuvA tetramers; dsDNA enters through RuvA and exits via RuvB. An RuvB hexamer assembles on each DNA strand where it exits the tetramer. Each RuvB hexamer is contacted by two RuvA subunits (via domain III) on 2 adjacent RuvB subunits; this complex drives branch migration. In the full resolvosome a probable DNA-RuvA(4)-RuvB(12)-RuvC(2) complex forms which resolves the HJ.

The protein localises to the cytoplasm. The RuvA-RuvB-RuvC complex processes Holliday junction (HJ) DNA during genetic recombination and DNA repair, while the RuvA-RuvB complex plays an important role in the rescue of blocked DNA replication forks via replication fork reversal (RFR). RuvA specifically binds to HJ cruciform DNA, conferring on it an open structure. The RuvB hexamer acts as an ATP-dependent pump, pulling dsDNA into and through the RuvAB complex. HJ branch migration allows RuvC to scan DNA until it finds its consensus sequence, where it cleaves and resolves the cruciform DNA. The sequence is that of Holliday junction branch migration complex subunit RuvA from Shewanella sp. (strain MR-7).